The following is a 220-amino-acid chain: Fructose-6-phosphate aldolase (220 aa).

Lys85 functions as the Schiff-base intermediate with substrate in the catalytic mechanism.

Belongs to the transaldolase family. Type 3A subfamily. As to quaternary structure, homodecamer.

It is found in the cytoplasm. It catalyses the reaction beta-D-fructose 6-phosphate = dihydroxyacetone + D-glyceraldehyde 3-phosphate. Catalyzes the reversible formation of fructose 6-phosphate from dihydroxyacetone and D-glyceraldehyde 3-phosphate via an aldolization reaction. The protein is Fructose-6-phosphate aldolase of Salmonella agona (strain SL483).